The following is a 285-amino-acid chain: 2,3,4,5-tetrahydropyridine-2,6-dicarboxylate N-succinyltransferase (285 aa).

Substrate contacts are provided by arginine 111 and aspartate 148.

It belongs to the transferase hexapeptide repeat family. As to quaternary structure, homotrimer.

The protein resides in the cytoplasm. It catalyses the reaction (S)-2,3,4,5-tetrahydrodipicolinate + succinyl-CoA + H2O = (S)-2-succinylamino-6-oxoheptanedioate + CoA. Its pathway is amino-acid biosynthesis; L-lysine biosynthesis via DAP pathway; LL-2,6-diaminopimelate from (S)-tetrahydrodipicolinate (succinylase route): step 1/3. This chain is 2,3,4,5-tetrahydropyridine-2,6-dicarboxylate N-succinyltransferase, found in Rhizobium meliloti (strain 1021) (Ensifer meliloti).